The primary structure comprises 261 residues: Putative outer membrane protein CT_371 (261 aa).

The first 18 residues, 1–18, serve as a signal peptide directing secretion; that stretch reads MRLCFILFLLLSPLISEA.

It localises to the cell outer membrane. This chain is Putative outer membrane protein CT_371, found in Chlamydia trachomatis serovar D (strain ATCC VR-885 / DSM 19411 / UW-3/Cx).